The chain runs to 360 residues: Carbamoyl phosphate synthase small chain (360 aa).

Positions 1–169 (MTKRLLILED…TKTAYPAPGI (169 aa)) are CPSase. L-glutamine contacts are provided by S46, G220, and G222. In terms of domain architecture, Glutamine amidotransferase type-1 spans 172-358 (NIVLVDFGLK…LEMIDSWRCT (187 aa)). C247 acts as the Nucleophile in catalysis. M248, Q251, N289, G291, and Y292 together coordinate L-glutamine. Active-site residues include H331 and D333.

This sequence belongs to the CarA family. In terms of assembly, composed of two chains; the small (or glutamine) chain promotes the hydrolysis of glutamine to ammonia, which is used by the large (or ammonia) chain to synthesize carbamoyl phosphate. Tetramer of heterodimers (alpha,beta)4.

The catalysed reaction is hydrogencarbonate + L-glutamine + 2 ATP + H2O = carbamoyl phosphate + L-glutamate + 2 ADP + phosphate + 2 H(+). The enzyme catalyses L-glutamine + H2O = L-glutamate + NH4(+). The protein operates within amino-acid biosynthesis; L-arginine biosynthesis; carbamoyl phosphate from bicarbonate: step 1/1. It participates in pyrimidine metabolism; UMP biosynthesis via de novo pathway; (S)-dihydroorotate from bicarbonate: step 1/3. In terms of biological role, small subunit of the glutamine-dependent carbamoyl phosphate synthetase (CPSase). CPSase catalyzes the formation of carbamoyl phosphate from the ammonia moiety of glutamine, carbonate, and phosphate donated by ATP, constituting the first step of 2 biosynthetic pathways, one leading to arginine and/or urea and the other to pyrimidine nucleotides. The small subunit (glutamine amidotransferase) binds and cleaves glutamine to supply the large subunit with the substrate ammonia. This Streptococcus pyogenes serotype M18 (strain MGAS8232) protein is Carbamoyl phosphate synthase small chain.